Consider the following 505-residue polypeptide: Aspartyl/glutamyl-tRNA(Asn/Gln) amidotransferase subunit B (505 aa).

Belongs to the GatB/GatE family. GatB subfamily. As to quaternary structure, heterotrimer of A, B and C subunits.

It carries out the reaction L-glutamyl-tRNA(Gln) + L-glutamine + ATP + H2O = L-glutaminyl-tRNA(Gln) + L-glutamate + ADP + phosphate + H(+). It catalyses the reaction L-aspartyl-tRNA(Asn) + L-glutamine + ATP + H2O = L-asparaginyl-tRNA(Asn) + L-glutamate + ADP + phosphate + 2 H(+). Functionally, allows the formation of correctly charged Asn-tRNA(Asn) or Gln-tRNA(Gln) through the transamidation of misacylated Asp-tRNA(Asn) or Glu-tRNA(Gln) in organisms which lack either or both of asparaginyl-tRNA or glutaminyl-tRNA synthetases. The reaction takes place in the presence of glutamine and ATP through an activated phospho-Asp-tRNA(Asn) or phospho-Glu-tRNA(Gln). This Kineococcus radiotolerans (strain ATCC BAA-149 / DSM 14245 / SRS30216) protein is Aspartyl/glutamyl-tRNA(Asn/Gln) amidotransferase subunit B.